The chain runs to 126 residues: E3 ubiquitin-protein ligase PPP1R11 (126 aa).

The interval Met1–Asn25 is disordered. Ala2 is modified (N-acetylalanine). A compositionally biased stretch (low complexity) spans Glu10–Glu22. The segment at His52 to Cys62 is atypical RING finger domain 1. The interval Phe70–His126 is disordered. Ser73 and Ser74 each carry phosphoserine. Residue Thr75 is modified to Phosphothreonine. At Ser77 the chain carries Phosphoserine. The tract at residues Cys85–His94 is atypical RING finger domain 2. The span at His89 to Ala101 shows a compositional bias: basic residues. A compositionally biased stretch (pro residues) spans Pro107–His126. Position 109 is a phosphothreonine (Thr109).

In terms of assembly, interacts with TLR2 and UBE2D2. In terms of processing, auto-ubiquitinated. Widely expressed.

It catalyses the reaction S-ubiquitinyl-[E2 ubiquitin-conjugating enzyme]-L-cysteine + [acceptor protein]-L-lysine = [E2 ubiquitin-conjugating enzyme]-L-cysteine + N(6)-ubiquitinyl-[acceptor protein]-L-lysine.. It functions in the pathway protein modification; protein ubiquitination. Its function is as follows. Atypical E3 ubiquitin-protein ligase which ubiquitinates TLR2 at 'Lys-754' leading to its degradation by the proteasome. Plays a role in regulating inflammatory cytokine release and gram-positive bacterial clearance by functioning, in part, through the ubiquitination and degradation of TLR2. Inhibitor of protein phosphatase 1. This Homo sapiens (Human) protein is E3 ubiquitin-protein ligase PPP1R11 (PPP1R11).